A 141-amino-acid chain; its full sequence is MMNTKKLLKMAKKWQQRAALRRKRISFHRSTDTTSSSTAAEKGCFVVYTSDRIRFAFPISYLSNSVIQELLKISEEEFGIPTEGPITLPFDSVFLEYLIRLVQRRMDGDTEKALITSISSTRCSLPCSFQLQEHSSTRLVF.

This sequence belongs to the ARG7 family.

It localises to the cell membrane. Functionally, may promote auxin-stimulated organ elongation, such as hypocotyls, stamen filaments and petals. The polypeptide is Auxin-responsive protein SAUR61 (Arabidopsis thaliana (Mouse-ear cress)).